The sequence spans 492 residues: Heat shock factor protein 4 (492 aa).

A DNA-binding region spans residues 17–121 (VPAFLGKLWA…QLLERVRRKV (105 aa)). A hydrophobic repeat HR-A/B region spans residues 129–203 (GRWRPEDLGR…GPLQAGPSNA (75 aa)). The interactions with DUSP26, MAPK1 and MAPK2 stretch occupies residues 245–322 (LPETNLGLSP…ECDFCVTAPP (78 aa)). The interval 246-285 (PETNLGLSPHRARGPIISDIPEDSPSPEGTRLSPSSDGRR) is disordered. K293 participates in a covalent cross-link: Glycyl lysine isopeptide (Lys-Gly) (interchain with G-Cter in SUMO). S298 carries the post-translational modification Phosphoserine. Residues 337-400 (GSFSPEGPRN…PAGPLDVLGP (64 aa)) form a disordered region. Residues 364–389 (LGLESGDRSPESLLPPMLLQPPQESV) form a hydrophobic repeat HR-C region. A compositionally biased stretch (low complexity) spans 374–388 (ESLLPPMLLQPPQES).

It belongs to the HSF family. As to quaternary structure, homotrimer. Exhibits constitutive DNA binding and forms trimers even in the absence of stress. Interacts with ALKBH4, DUSP26, MAPK1, MAPK2, MAPK8 and MAP kinase p38. Post-translationally, phosphorylated mainly on serine residues. Phosphorylation on Ser-298 promotes sumoylation on Lys-293. In terms of processing, isoform HSF4B is constitutively sumoylated. Sumoylation represses the transcriptional activity and is promoted by phosphorylation on Ser-298. HSFA is not sumoylated. In terms of tissue distribution, expressed in heart, skeletal muscle, eye and brain, and at much lower levels in some other tissues.

It is found in the nucleus. Its function is as follows. Heat-shock transcription factor that specifically binds heat shock promoter elements (HSE). Required for denucleation and organelle rupture and degradation that occur during eye lens terminal differentiation, when fiber cells that compose the lens degrade all membrane-bound organelles in order to provide lens with transparency to allow the passage of light. In this process, may regulate denucleation of lens fiber cells in part by activating DNASE2B transcription. May be involved in DNA repair through the transcriptional regulation of RAD51. May up-regulate p53/TP53 protein in eye lens fiber cells, possibly through protein stabilization. In the eye lens, controls the expression of alpha-crystallin B chain/CRYAB and consequently may be involved in the regulation of lysosomal acidification. Transcriptional repressor. In terms of biological role, transcriptional activator. This chain is Heat shock factor protein 4 (HSF4), found in Homo sapiens (Human).